The following is a 530-amino-acid chain: C2H2-type transcription factor MSN2 (530 aa).

2 C2H2-type zinc fingers span residues F409–P437 and F438–A465.

It localises to the nucleus. The protein resides in the cytoplasm. Transcription factor that acts as a key downstream transcription factor in the HOG1-MAPK pathway. Plays crucial roles in the regulation of dimorphism transition, aggravated pigmentation, conidiation, microsclerotia formation and subsequent virulence towards Spodoptera litura larvae. More specifically regulates the expression of genes involved in antioxidation, pigment biosynthesis and ion transport and storage. This Metarhizium rileyi (strain RCEF 4871) (Nomuraea rileyi) protein is C2H2-type transcription factor MSN2.